We begin with the raw amino-acid sequence, 256 residues long: Triosephosphate isomerase (256 aa).

Position 9 to 11 (9 to 11 (NWK)) interacts with substrate. His97 functions as the Electrophile in the catalytic mechanism. Residue Glu169 is the Proton acceptor of the active site. Substrate is bound by residues Gly175, Ser214, and 235–236 (GG).

It belongs to the triosephosphate isomerase family. As to quaternary structure, homodimer.

The protein resides in the cytoplasm. The catalysed reaction is D-glyceraldehyde 3-phosphate = dihydroxyacetone phosphate. It functions in the pathway carbohydrate biosynthesis; gluconeogenesis. Its pathway is carbohydrate degradation; glycolysis; D-glyceraldehyde 3-phosphate from glycerone phosphate: step 1/1. Involved in the gluconeogenesis. Catalyzes stereospecifically the conversion of dihydroxyacetone phosphate (DHAP) to D-glyceraldehyde-3-phosphate (G3P). This Moritella marina (Vibrio marinus) protein is Triosephosphate isomerase.